The following is a 101-amino-acid chain: Large ribosomal subunit protein uL23 (101 aa).

This sequence belongs to the universal ribosomal protein uL23 family. Part of the 50S ribosomal subunit. Contacts protein L29, and trigger factor when it is bound to the ribosome.

Its function is as follows. One of the early assembly proteins it binds 23S rRNA. One of the proteins that surrounds the polypeptide exit tunnel on the outside of the ribosome. Forms the main docking site for trigger factor binding to the ribosome. The sequence is that of Large ribosomal subunit protein uL23 from Mannheimia succiniciproducens (strain KCTC 0769BP / MBEL55E).